A 99-amino-acid chain; its full sequence is Nucleoid-associated protein LL0120 (99 aa).

It belongs to the YbaB/EbfC family. In terms of assembly, homodimer.

The protein localises to the cytoplasm. The protein resides in the nucleoid. Binds to DNA and alters its conformation. May be involved in regulation of gene expression, nucleoid organization and DNA protection. The polypeptide is Nucleoid-associated protein LL0120 (ybcG) (Lactococcus lactis subsp. lactis (strain IL1403) (Streptococcus lactis)).